Reading from the N-terminus, the 765-residue chain is Transcription factor RFX3 (765 aa).

A DNA-binding region (RFX-type winged-helix) is located at residues 189–264 (HLQWLLDNYE…YHYYGIRVKP (76 aa)).

Belongs to the RFX family.

The protein localises to the nucleus. Functionally, transcription factor required for ciliogenesis and islet cell differentiation during endocrine pancreas development. The protein is Transcription factor RFX3 (rfx3) of Danio rerio (Zebrafish).